The sequence spans 888 residues: MSNWYSKTKDQTLIDLETNEQHGLTEEIASERLKQYGSNELATKQKRTLWQRIFAQINDVLVYVLIIAALISAFVGEWADASIIALVVVLNAVIGVVQESKAEQALEALKKMATPKAIVKRDGELKEIPSEHVVPGDIVMLDAGRYIPCDLRLIETANLKVEESALTGESVPVDKDAIYHPSMQSDEQVPLGDQKNMAFMSTLVTYGRGVGVAVETGMNSQIGKIATLLHEADDDMTPLQKSLAQVGKYLGFVAVAICIVMFLIGFLQRRDTLEMFMTAISLAVAAIPEGLPAIVSIVLAIGVQRMIKQNVIIRKLPAVEALGSVTIICSDKTGTLTQNKMTVTHFYSDNTYDQLENLNVNNDVQRLLLENMVLCNDASYNNESQTGDPTEIALLVAGSTFNMQKDYLEKIHERINELPFDSDRKMMSTVHTYDESYYSMTKGAIDKLLPRCTHILKNGKIEVLTEADKNQILEAARAMSREALRVLSFAFKQYNSSNVDIDHLEENLIFIGLVGMIDPPRTEVKDSITECKKAGIRTVMITGDHKDTAFAIAKELGIAEDICEIMIGTELDNISDTELASKIDHLHVFARVSPEHKVKIVKALRAKGNIVSMTGDGVNDAPSLKQADVGVAMGITGTDVAKGAADVVLTDDNFSSIVKAVEEGRNIYRNIKKSILFLLSCNFGEIITLFLAILLGWATPLRPIHILWVNLITDTLPALSLGVDPEDPDVMKEKPRHAKESLFSGSVPFLIFNGVVIGLLTLIAFIAGAKFYTGDTNLFPLFPERIDEDALLHAQTMAFVVLSFSQLVHSFNLRSRTKSIFSIGIFTNKYLVFSLLIGVLMQVCIISIPPLANIFGVHALTLRDWGFVLLLSIIPLVVNEIIKLAKKN.

Transmembrane regions (helical) follow at residues 53 to 75 (IFAQINDVLVYVLIIAALISAFV), 79 to 97 (ADASIIALVVVLNAVIGVV), 246 to 266 (VGKYLGFVAVAICIVMFLIGF), and 283 to 303 (AVAAIPEGLPAIVSIVLAIGV). Residues Val284, Ala285, Ile287, and Glu289 each coordinate Ca(2+). The 4-aspartylphosphate intermediate role is filled by Asp331. The next 6 helical transmembrane spans lie at 675–695 (ILFLLSCNFGEIITLFLAILL), 703–723 (PIHILWVNLITDTLPALSLGV), 747–767 (VPFLIFNGVVIGLLTLIAFIA), 791–811 (LLHAQTMAFVVLSFSQLVHSF), 831–851 (LVFSLLIGVLMQVCIISIPPL), and 865–885 (WGFVLLLSIIPLVVNEIIKLA). Residues Asn710 and Asp714 each coordinate Ca(2+).

This sequence belongs to the cation transport ATPase (P-type) (TC 3.A.3) family. Type IIA subfamily.

It is found in the cell membrane. The catalysed reaction is Ca(2+)(in) + ATP + H2O = Ca(2+)(out) + ADP + phosphate + H(+). Inhibited by cyclopiazonic acid (CPA). Catalyzes the hydrolysis of ATP coupled with the transport of calcium. This Bacillus cereus (strain ATCC 10987 / NRS 248) protein is Calcium-transporting ATPase 1.